Here is a 207-residue protein sequence, read N- to C-terminus: SPRY domain-containing protein 4 (207 aa).

Positions 12–207 constitute a B30.2/SPRY domain; it reads YRWGTKRWGV…HSGLEVPKGL (196 aa). Residues Lys-53 and Lys-130 each carry the N6-acetyllysine modification. Lys-139 carries the N6-succinyllysine modification.

The chain is SPRY domain-containing protein 4 (Spryd4) from Rattus norvegicus (Rat).